A 1410-amino-acid polypeptide reads, in one-letter code: MAPPFVFPQILRALEEDPEDNHRLFAQNPVDVTSLRPSDLEEFVKGVSFDLSDRELFCVEDQDVFDRVYSLVRSFFSLPPSCKCNLVESLRSNLSVLLPNVDSISRSVQDQEDDVPIIDRITSHRNALKIYTFFLLTVVMNEESHISSVETTKVAARGRKKQIIQSWNWEPQRGRMLNLIANSLEINLSLLFGSSDLDENYLSFIVKNSFTLFENATILKDAETKDALCRIIGASATKYHYIVQSCASIMHLIHKYDFAVVHIADAVARAESKYSDGTLAVTIIRDIGRTDPKAYVKDTAGADNVGRFLVELADRLPKLMSTNVGVLVPHFGGESYKIRNALVGVLGKLVAKAFNDVEGDMSSKSLRLRTKQAMLEILLERCRDVSAYTRSRVLQVWAELCEEHSVSIGLWNEVASLSAGRLEDKSAIVRKSALNLLIMMLQHNPFGPQLRIASFEATLEQYKRKLNELEPTEHASKESTSDGESCNGDGEIDDLHLETTTKIHQDSLSDSCQPENGEEISEKDVSVPDIGNVEQTKALIASLEAGLRFSKCMSASMPILVQLMASSSATDVENAILLLMRCKQFQIDGAEACLRKILPLAFSQDKSIYEAVENAFISIYIRKNPVDTAKQLLNLAIDSNIGDQAALEFIVNALVSKGEISSSTTSALWDFFCFNINGTTAEQSRGALSILCMAAKSSPRILGSHIQDIIDIGFGRWAKVEPLLARTACTVIQRFSEEDRKKLLLSSGSRLFGILESLITGNWLPENIYYATADKAISAIYMIHPTPETLASTIIKKSLSTVFDVVEQEEAQTDTENNKVDILTPVQVAKLSRFLFAVSHIAMNQLVYIESCIQKIRRQKTKKDKPAAESQNTEENLEATQENNGINAELGLAASDDALLDTLAERAEREIVSGGSVEKNLIGECATFLSKLCRNFSLLQKHPELQASAMLALCRFMIIDASFCESNLQLLFTVVENAPSEVVRSNCTLSLGDLAVRFPNLLEPWTENMYARLRDASVSVRKNAVLVLSHLILNDMMKVKGYIYEMAICIEDDVERISSLAKLFFHELSKKGSNPIYNLLPDILGQLSNRNLERESFCNVMQFLIGSIKKDKQMEALVEKLCNRFSGVTDGKQWEYISYSLSLLTFTEKGIKKLIESFKSYEHALAEDLVTENFRSIINKGKKFAKPELKACIEEFEEKINKFHMEKKEQEETARNAEVHREKTKTMESLAVLSKVKEEPVEEYDEGEGVSDSEIVDPSMEESGDNLVETESEEEPSDSEEEPDSAQCGTAIPRYLNQKTSGDNLIETEPEEEQSDSEPDSAQCGTTNPRSLNRKTSGDNLIETESEEEQSDSEEEPSDSEEEPDSAQCGTTNPRSLNQKTSGGEEGESESKSTESSSSIRRNLRSGSRS.

Residues 469-480 show a composition bias toward basic and acidic residues; sequence LEPTEHASKEST. Disordered stretches follow at residues 469 to 492, 504 to 525, 860 to 879, and 1208 to 1410; these read LEPT…DGEI, HQDS…EKDV, KTKK…NLEA, and KEQE…GSRS. Polar residues predominate over residues 869–879; it reads ESQNTEENLEA. A compositionally biased stretch (basic and acidic residues) spans 1208 to 1226; sequence KEQEETARNAEVHREKTKT. Composition is skewed to acidic residues over residues 1240–1284 and 1306–1319; these read PVEE…EEPD and IETE…DSEP. The segment covering 1323-1339 has biased composition (polar residues); the sequence is QCGTTNPRSLNRKTSGD. Acidic residues predominate over residues 1342–1365; the sequence is IETESEEEQSDSEEEPSDSEEEPD. Residues 1368 to 1379 show a composition bias toward polar residues; sequence QCGTTNPRSLNQ.

Belongs to the CND1 (condensin subunit 1) family. In terms of assembly, component of the condensin complex. Present in buds.

It is found in the chromosome. It localises to the nucleus. Its function is as follows. Essential protein. Regulatory subunit of the condensin complex, a complex required for conversion of interphase chromatin into mitotic-like condense chromosomes. The condensin complex probably introduces positive supercoils into relaxed DNA in the presence of type I topoisomerases and converts nicked DNA into positive knotted forms in the presence of type II topoisomerases. Required for fertility, growth and euchromatin organization, but not for sister chromatid cohesion. Necessary to maintain normal structural integrity of the meiotic chromosomes during the two nuclear divisions of gametogenesis, especially to maintain compaction of the centromeric repeats and 45S rDNA. Also seems to be involved in crossover formation during meiotic prophase I. Prevents centromeric and pericentromeric heterochromatin repeats association. Contributes to the induction of stress-responsive genes in response to stress treatment. This Arabidopsis thaliana (Mouse-ear cress) protein is Condensin-1 complex subunit CAP-D2.